The chain runs to 238 residues: Ribosomal RNA small subunit methyltransferase G (238 aa).

S-adenosyl-L-methionine-binding positions include G77, F82, 128 to 129 (AE), and R147.

It belongs to the methyltransferase superfamily. RNA methyltransferase RsmG family.

The protein resides in the cytoplasm. Specifically methylates the N7 position of guanine in position 535 of 16S rRNA. In Brevibacillus brevis (strain 47 / JCM 6285 / NBRC 100599), this protein is Ribosomal RNA small subunit methyltransferase G.